The following is a 164-amino-acid chain: Phosphopantetheine adenylyltransferase (164 aa).

S9 serves as a coordination point for substrate. ATP contacts are provided by residues S9–F10 and H17. Positions 41, 73, and 87 each coordinate substrate. ATP-binding positions include G88–R90, E98, and Y123–S129.

This sequence belongs to the bacterial CoaD family. As to quaternary structure, homohexamer. It depends on Mg(2+) as a cofactor.

It localises to the cytoplasm. It catalyses the reaction (R)-4'-phosphopantetheine + ATP + H(+) = 3'-dephospho-CoA + diphosphate. Its pathway is cofactor biosynthesis; coenzyme A biosynthesis; CoA from (R)-pantothenate: step 4/5. Reversibly transfers an adenylyl group from ATP to 4'-phosphopantetheine, yielding dephospho-CoA (dPCoA) and pyrophosphate. The protein is Phosphopantetheine adenylyltransferase of Clostridium perfringens (strain 13 / Type A).